Here is a 99-residue protein sequence, read N- to C-terminus: UPF0473 protein Athe_1150 (99 aa).

It belongs to the UPF0473 family.

The polypeptide is UPF0473 protein Athe_1150 (Caldicellulosiruptor bescii (strain ATCC BAA-1888 / DSM 6725 / KCTC 15123 / Z-1320) (Anaerocellum thermophilum)).